The sequence spans 164 residues: 5-formyltetrahydrofolate cyclo-ligase (164 aa).

Residue 3 to 7 (KNALR) coordinates ATP. 2 residues coordinate substrate: Glu-50 and Glu-55. 115-123 (RLGFGKGYY) lines the ATP pocket. Asp-124 lines the Mg(2+) pocket. Positions 125 and 153 each coordinate ATP. Asp-154 is a binding site for Mg(2+).

Belongs to the 5-formyltetrahydrofolate cyclo-ligase family. Monomer or homodimer. Mg(2+) is required as a cofactor. Requires Mn(2+) as cofactor. Ca(2+) serves as cofactor. It depends on Zn(2+) as a cofactor. The cofactor is Fe(2+). Co(2+) is required as a cofactor. Requires Cu(2+) as cofactor.

The protein localises to the cytoplasm. The enzyme catalyses (6S)-5-formyl-5,6,7,8-tetrahydrofolate + ATP = (6R)-5,10-methenyltetrahydrofolate + ADP + phosphate. In terms of biological role, involved in folate metabolism. Catalyzes the irreversible conversion of 5-formyltetrahydrofolate (5-FTHF) to yield 5,10-methenyltetrahydrofolate. In Mycoplasma pneumoniae (strain ATCC 29342 / M129 / Subtype 1) (Mycoplasmoides pneumoniae), this protein is 5-formyltetrahydrofolate cyclo-ligase.